The primary structure comprises 554 residues: Chaperonin GroEL (554 aa).

ATP contacts are provided by residues 30–33 (TLGP), Lys-51, 87–91 (DGTTT), Gly-416, and Asp-503.

It belongs to the chaperonin (HSP60) family. As to quaternary structure, forms a cylinder of 14 subunits composed of two heptameric rings stacked back-to-back. Interacts with the co-chaperonin GroES.

The protein localises to the cytoplasm. It carries out the reaction ATP + H2O + a folded polypeptide = ADP + phosphate + an unfolded polypeptide.. Functionally, together with its co-chaperonin GroES, plays an essential role in assisting protein folding. The GroEL-GroES system forms a nano-cage that allows encapsulation of the non-native substrate proteins and provides a physical environment optimized to promote and accelerate protein folding. This chain is Chaperonin GroEL, found in Holospora obtusa.